Here is a 323-residue protein sequence, read N- to C-terminus: Serine/threonine-protein phosphatase PP1-gamma catalytic subunit (323 aa).

At alanine 2 the chain carries N-acetylalanine. Mn(2+) is bound by residues aspartate 64, histidine 66, aspartate 92, and asparagine 124. Histidine 125 (proton donor) is an active-site residue. Mn(2+)-binding residues include histidine 173 and histidine 248. Residues threonine 307 and threonine 311 each carry the phosphothreonine modification.

The protein belongs to the PPP phosphatase family. PP-1 subfamily. In terms of assembly, PP1 comprises a catalytic subunit, PPP1CA, PPP1CB or PPP1CC, which is folded into its native form by inhibitor 2 and glycogen synthetase kinase 3, and then complexed to one or several targeting or regulatory subunits. PPP1R12A, PPP1R12B and PPP1R12C mediate binding to myosin. PPP1R3A (in skeletal muscle), PPP1R3B (in liver), PPP1R3C, PPP1R3D and PPP1R3F (in brain) mediate binding to glycogen. PPP1R15A and PPP1R15B mediate binding to EIF2S1. Part of a complex containing PPP1R15B, PP1 and NCK1/2. Interacts with PPP1R3B, PPP1R7 and CDCA2. Interacts with IKFZ1; the interaction targets PPP1CC to pericentromeric heterochromatin, dephosphorylates IKAROS, stabilizes it and prevents it from degradation. Interacts with NOM1 and PPP1R8. Component of the PTW/PP1 phosphatase complex, composed of PPP1R10/PNUTS, TOX4, WDR82, and PPP1CA or PPP1CB or PPP1CC. Interacts with PPP1R8. Interacts with NEK2. Interacts with PPP1R42; the interaction is direct. Interacts with URI1; the interaction is phosphorylation-dependent and occurs in a growth factor-dependent manner. Interacts with FOXP3. Interacts with TMEM225 (via RVxF motif). Interacts with MKI67. Interacts with RRP1B; this targets PPP1CC to the nucleolus. Interacts with DYNLT4. Interacts (via RVxF motif) with FIRRM; regulates PLK1 kinase activity. Interacts with the KNL1 complex subunit KNL1; the interaction is direct and mutually exclusive with KNL1 binding to microtubules. Component of the SHOC2-MRAS-PP1c (SMP) complex consisting of SHOC2, GTP-bound M-Ras/MRAS and the catalytic subunit of protein phosphatase 1 (either PPP1CA, PPP1CB or PPP1CC). SHOC2 and PP1c preferably bind M-Ras/MRAS, but they also bind K-Ras/KRAS, N-Ras/NRAS and H-Ras/HRAS; these interactions are GTP-dependent and both SHOC2 and PP1c are required to form a stable complex. Interacts with SHOC2 in the absence of Ras GTPases. Mn(2+) is required as a cofactor. In terms of processing, phosphorylated by NEK2.

It is found in the cytoplasm. Its subcellular location is the nucleus. It localises to the cleavage furrow. The protein resides in the nucleolus. The protein localises to the nucleoplasm. It is found in the chromosome. Its subcellular location is the centromere. It localises to the kinetochore. The protein resides in the nucleus speckle. The protein localises to the midbody. It is found in the mitochondrion. Its subcellular location is the cytoskeleton. It localises to the microtubule organizing center. It catalyses the reaction O-phospho-L-seryl-[protein] + H2O = L-seryl-[protein] + phosphate. It carries out the reaction O-phospho-L-threonyl-[protein] + H2O = L-threonyl-[protein] + phosphate. Inactivated by binding to URI1. Functionally, protein phosphatase that associates with over 200 regulatory proteins to form highly specific holoenzymes which dephosphorylate hundreds of biological targets. Protein phosphatase 1 (PP1) is essential for cell division, and participates in the regulation of glycogen metabolism, muscle contractility and protein synthesis. Dephosphorylates RPS6KB1. Involved in regulation of ionic conductances and long-term synaptic plasticity. May play an important role in dephosphorylating substrates such as the postsynaptic density-associated Ca(2+)/calmodulin dependent protein kinase II. Component of the PTW/PP1 phosphatase complex, which plays a role in the control of chromatin structure and cell cycle progression during the transition from mitosis into interphase. Regulates the recruitment of the SKA complex to kinetochores. Core component of the SHOC2-MRAS-PP1c (SMP) holophosphatase complex that regulates the MAPK pathway activation. Dephosphorylates MKI67 at the onset of anaphase. The SMP complex specifically dephosphorylates the inhibitory phosphorylation at 'Ser-259' of RAF1 kinase, 'Ser-365' of BRAF kinase and 'Ser-214' of ARAF kinase, stimulating their kinase activities. The SMP complex enhances the dephosphorylation activity and substrate specificity of PP1c. The polypeptide is Serine/threonine-protein phosphatase PP1-gamma catalytic subunit (PPP1CC) (Canis lupus familiaris (Dog)).